Here is a 271-residue protein sequence, read N- to C-terminus: Elongation factor Ts (271 aa).

The tract at residues 76-79 (TDFV) is involved in Mg(2+) ion dislocation from EF-Tu.

Belongs to the EF-Ts family.

It localises to the cytoplasm. Functionally, associates with the EF-Tu.GDP complex and induces the exchange of GDP to GTP. It remains bound to the aminoacyl-tRNA.EF-Tu.GTP complex up to the GTP hydrolysis stage on the ribosome. The polypeptide is Elongation factor Ts (Mycolicibacterium vanbaalenii (strain DSM 7251 / JCM 13017 / BCRC 16820 / KCTC 9966 / NRRL B-24157 / PYR-1) (Mycobacterium vanbaalenii)).